The sequence spans 214 residues: MKFFIDTADVNEIREAHELGLVDGVTTNPSLIAKSGRKFEEVIKEITGIVDGPISAEVVSLDHDGMIREAEELAAIHKNIVIKLPMTPEGLKACTTLTKKGIKTNVTLIFTAMQALLAAKAGATYVSPFVGRLDDISQDGMGIIDDIKTIFDNYGYTAEIIVASVRNPIHVLNAALIGADIATIPYSVMLQLAKHPLTDAGIERFLKDWEKVPK.

Lys-83 serves as the catalytic Schiff-base intermediate with substrate.

This sequence belongs to the transaldolase family. Type 3B subfamily.

The protein resides in the cytoplasm. The catalysed reaction is D-sedoheptulose 7-phosphate + D-glyceraldehyde 3-phosphate = D-erythrose 4-phosphate + beta-D-fructose 6-phosphate. The protein operates within carbohydrate degradation; pentose phosphate pathway; D-glyceraldehyde 3-phosphate and beta-D-fructose 6-phosphate from D-ribose 5-phosphate and D-xylulose 5-phosphate (non-oxidative stage): step 2/3. Its function is as follows. Transaldolase is important for the balance of metabolites in the pentose-phosphate pathway. The protein is Probable transaldolase of Geobacter metallireducens (strain ATCC 53774 / DSM 7210 / GS-15).